Reading from the N-terminus, the 184-residue chain is Ribosome-recycling factor (184 aa).

The protein belongs to the RRF family.

It is found in the cytoplasm. Functionally, responsible for the release of ribosomes from messenger RNA at the termination of protein biosynthesis. May increase the efficiency of translation by recycling ribosomes from one round of translation to another. The sequence is that of Ribosome-recycling factor from Psychrobacter sp. (strain PRwf-1).